A 1004-amino-acid chain; its full sequence is Phyllocladan-16-alpha-ol synthase (1004 aa).

The DXDD motif signature appears at 321–324 (DADD). Mg(2+) is bound by residues D667, E671, N872, D873, S876, and D880. Positions 667-671 (DEFME) match the DEXXE motif motif.

Belongs to the terpene synthase family. It depends on Mg(2+) as a cofactor.

The catalysed reaction is (2E,6E,10E)-geranylgeranyl diphosphate = (+)-copalyl diphosphate. The enzyme catalyses (+)-copalyl diphosphate + H2O = phyllocladan-16alpha-ol + diphosphate. Its function is as follows. Involved in the synthesis of labdane-related hydrocarbons by catalyzing the conversion of geranylgeranyl diphosphate (GGDP) to phyllocladan-16-alpha-ol in a two step via type B cyclization into a (+)-copalyl diphosphate ((+)-CDP) intermediate. The chain is Phyllocladan-16-alpha-ol synthase (PaDC1) from Phomopsis amygdali (Fusicoccum amygdali).